A 70-amino-acid chain; its full sequence is MLRWLLLKLIRFYQVAISPWTPPSCIYTPTCSHYGYEAIKKYGALRGGWMTVKRIARCHPFARGGYDPVP.

It belongs to the UPF0161 family.

It localises to the cell membrane. Its function is as follows. Could be involved in insertion of integral membrane proteins into the membrane. In Chloroflexus aurantiacus (strain ATCC 29366 / DSM 635 / J-10-fl), this protein is Putative membrane protein insertion efficiency factor.